Reading from the N-terminus, the 90-residue chain is uncharacterized protein (90 aa).

It belongs to the barstar family.

This is an uncharacterized protein from Escherichia coli O157:H7.